A 491-amino-acid polypeptide reads, in one-letter code: Adenylosuccinate synthetase, chloroplastic (491 aa).

Residues 78–84 and 106–108 contribute to the GTP site; these read GDEGKGK and GHT. Asp79 functions as the Proton acceptor in the catalytic mechanism. The Mg(2+) site is built by Asp79 and Gly106. IMP is bound by residues 79-82, 104-107, Thr196, Arg210, Gln290, Thr305, and Arg369; these read DEGK and NAGH. Catalysis depends on His107, which acts as the Proton donor. 365–371 provides a ligand contact to substrate; sequence TTTGRPR. GTP contacts are provided by residues Arg371, 397 to 399, and 480 to 482; these read KLD and GIG.

Belongs to the adenylosuccinate synthetase family. As to quaternary structure, homodimer. The cofactor is Mg(2+).

Its subcellular location is the plastid. It is found in the chloroplast. It carries out the reaction IMP + L-aspartate + GTP = N(6)-(1,2-dicarboxyethyl)-AMP + GDP + phosphate + 2 H(+). It functions in the pathway purine metabolism; AMP biosynthesis via de novo pathway; AMP from IMP: step 1/2. Plays an important role in the de novo pathway and in the salvage pathway of purine nucleotide biosynthesis. Catalyzes the first committed step in the biosynthesis of AMP from IMP. The sequence is that of Adenylosuccinate synthetase, chloroplastic from Populus trichocarpa (Western balsam poplar).